The sequence spans 366 residues: tRNA/tmRNA (uracil-C(5))-methyltransferase (366 aa).

S-adenosyl-L-methionine contacts are provided by Q190, Y218, N223, E239, and D299. C324 acts as the Nucleophile in catalysis. E358 (proton acceptor) is an active-site residue.

This sequence belongs to the class I-like SAM-binding methyltransferase superfamily. RNA M5U methyltransferase family. TrmA subfamily.

It carries out the reaction uridine(54) in tRNA + S-adenosyl-L-methionine = 5-methyluridine(54) in tRNA + S-adenosyl-L-homocysteine + H(+). It catalyses the reaction uridine(341) in tmRNA + S-adenosyl-L-methionine = 5-methyluridine(341) in tmRNA + S-adenosyl-L-homocysteine + H(+). Dual-specificity methyltransferase that catalyzes the formation of 5-methyluridine at position 54 (m5U54) in all tRNAs, and that of position 341 (m5U341) in tmRNA (transfer-mRNA). The sequence is that of tRNA/tmRNA (uracil-C(5))-methyltransferase from Salmonella choleraesuis (strain SC-B67).